Consider the following 155-residue polypeptide: Putative pre-16S rRNA nuclease (155 aa).

It belongs to the YqgF nuclease family.

The protein localises to the cytoplasm. Its function is as follows. Could be a nuclease involved in processing of the 5'-end of pre-16S rRNA. The polypeptide is Putative pre-16S rRNA nuclease (Xanthomonas campestris pv. campestris (strain B100)).